The sequence spans 510 residues: Sucrose transport protein SUC4 (510 aa).

The disordered stretch occupies residues 1–34; the sequence is MATSDQDRRHRVTRNRPPIARPSTSSSRPVVSPP. Topologically, residues 1–45 are cytoplasmic; sequence MATSDQDRRHRVTRNRPPIARPSTSSSRPVVSPPRSKVSKRVLLR. The span at 21-34 shows a compositional bias: low complexity; sequence RPSTSSSRPVVSPP. Position 23 is a phosphoserine (Ser23). The helical transmembrane segment at 46 to 66 threads the bilayer; that stretch reads VASVACGIQFGWALQLSLLTP. Residues 67–71 are Extracellular-facing; it reads YVQEL. A helical membrane pass occupies residues 72–92; the sequence is GIPHAWASVIWLCGPLSGLFV. Topologically, residues 93-111 are cytoplasmic; that stretch reads QPLVGHSSDRCTSKYGRRR. The helical transmembrane segment at 112–132 threads the bilayer; it reads PFIVAGAVAISISVMVIGHAA. Over 133–148 the chain is Extracellular; that stretch reads DIGWAFGDREGKIKPR. A helical transmembrane segment spans residues 149-169; the sequence is AIVAFVLGFWILDVANNMTQG. The Cytoplasmic segment spans residues 170-187; sequence PCRALLADLTENDNRRTR. A helical transmembrane segment spans residues 188–208; it reads VANGYFSLFMAVGNVLGYATG. Over 209–233 the chain is Extracellular; it reads SYNGWYKIFTFTKTVACNVECANLK. Residues 234–254 form a helical membrane-spanning segment; sequence SAFYIDVVFIAITTILSVSAA. The Cytoplasmic portion of the chain corresponds to 255–291; sequence HEVPLASLASEAHGQTSGTDEAFLSEIFGTFRYFPGN. A helical membrane pass occupies residues 292 to 312; sequence VWIILLVTALTWIGWFPFILF. At 313 to 335 the chain is on the extracellular side; the sequence is DTDWMGREIYGGEPNIGTSYSAG. A helical membrane pass occupies residues 336–356; that stretch reads VSMGALGLMLNSVFLGITSVL. Over 357 to 365 the chain is Cytoplasmic; that stretch reads MEKLCRKWG. Residues 366–386 traverse the membrane as a helical segment; that stretch reads AGFVWGISNILMAICFLGMII. Topologically, residues 387-402 are extracellular; that stretch reads TSFVASHLGYIGHEQP. The chain crosses the membrane as a helical span at residues 403-423; that stretch reads PASIVFAAVLIFTILGIPLAI. Topologically, residues 424-443 are cytoplasmic; it reads TYSVPYALISIRIESLGLGQ. Residues 444–464 traverse the membrane as a helical segment; it reads GLSLGVLNLAIVIPQVIVSVG. At 465 to 477 the chain is on the extracellular side; that stretch reads SGPWDQLFGGGNS. The helical transmembrane segment at 478–498 threads the bilayer; that stretch reads PALAVGAATGFIGGIVAILAL. Residues 499-510 lie on the Cytoplasmic side of the membrane; that stretch reads PRTRIQKPIPLP.

Belongs to the glycoside-pentoside-hexuronide (GPH) cation symporter transporter (TC 2.A.2.4) family. As to quaternary structure, homodimer. Interacts with SUC2 and SUC3. In terms of tissue distribution, expressed in sink tissues, mostly in minor veins of sink leaves. Localized in companion cells.

The protein localises to the cell membrane. It catalyses the reaction sucrose(out) + H(+)(out) = sucrose(in) + H(+)(in). The protein operates within glycan biosynthesis; sucrose metabolism. Its function is as follows. Responsible for the transport of sucrose into the cell, with the concomitant uptake of protons (symport system). Can also transport maltose at a lesser rate. May also transport biotin. The chain is Sucrose transport protein SUC4 from Arabidopsis thaliana (Mouse-ear cress).